The sequence spans 225 residues: NAD(P)H-quinone oxidoreductase subunit K, chloroplastic (225 aa).

Residues cysteine 43, cysteine 44, cysteine 108, and cysteine 139 each coordinate [4Fe-4S] cluster.

This sequence belongs to the complex I 20 kDa subunit family. As to quaternary structure, NDH is composed of at least 16 different subunits, 5 of which are encoded in the nucleus. [4Fe-4S] cluster is required as a cofactor.

Its subcellular location is the plastid. It localises to the chloroplast thylakoid membrane. The enzyme catalyses a plastoquinone + NADH + (n+1) H(+)(in) = a plastoquinol + NAD(+) + n H(+)(out). The catalysed reaction is a plastoquinone + NADPH + (n+1) H(+)(in) = a plastoquinol + NADP(+) + n H(+)(out). Functionally, NDH shuttles electrons from NAD(P)H:plastoquinone, via FMN and iron-sulfur (Fe-S) centers, to quinones in the photosynthetic chain and possibly in a chloroplast respiratory chain. The immediate electron acceptor for the enzyme in this species is believed to be plastoquinone. Couples the redox reaction to proton translocation, and thus conserves the redox energy in a proton gradient. This is NAD(P)H-quinone oxidoreductase subunit K, chloroplastic from Manihot esculenta (Cassava).